Reading from the N-terminus, the 344-residue chain is MAPSLRVAVTQAEPEWLDLAGTVKKTCELITEAANNGARLIAFPECWVTGYPGWIWARPVDFELNTKYIYNSLSIGSPEFEQIASTAKRHSIAVVLGFSERTSTHSLYISQAIISPQGATLLHRRKIKPTHVERAVFGDGSGADLSNVVDVDFGGDVGVVKVGALACWEHTQPLLKYHTYSQGEVIHVAAWPPIDPHPGVEHPGLWSMSAEGCQNLSQTYAVEGGGYVLHCTGVCTEKGMETMGTHKGLLFHTPGGGHSCVIGPDGRRLTQPLHGGDPAKEGIVYADLDLTNVVANRSFLDNVGHYSRPDLLWLGVDRKQKQHVIPRDEEEPSRKANVVVPKQE.

A CN hydrolase domain is found at 5–290 (LRVAVTQAEP…EGIVYADLDL (286 aa)). Glu-45 serves as the catalytic Proton acceptor. The active site involves Lys-126. Cys-167 acts as the Nucleophile in catalysis. Positions 324-344 (VIPRDEEEPSRKANVVVPKQE) are disordered.

It belongs to the carbon-nitrogen hydrolase superfamily. Nitrilase family.

The enzyme catalyses a nitrile + 2 H2O = a carboxylate + NH4(+). The catalysed reaction is 4-chlorophenylacetonitrile + 2 H2O = 4-chlorophenylacetate + NH4(+). In terms of biological role, nitrilase that hydrolyzes preferentially phenylacetonitrile and (R,S)-mandelonitrile. Also acts on dinitriles like phenylenediacetonitriles (PDAs) 1,2-PDA, 1,3-PDA, and 1,4-PDA, and cyanophenyl acetonitriles (CPAs) 2-CPA and 4-CPA. The sequence is that of Arylacetonitrilase from Macrophomina phaseolina (strain MS6) (Charcoal rot fungus).